The primary structure comprises 683 residues: Elongation factor G-like protein (683 aa).

A tr-type G domain is found at 5-267 (QNVRSAALIG…YLGDIGVSPE (263 aa)). GTP contacts are provided by residues 14–21 (GHNGSGKS), 73–77 (DTPGF), and 127–130 (NQMD).

The protein belongs to the TRAFAC class translation factor GTPase superfamily. Classic translation factor GTPase family. EF-G/EF-2 subfamily.

This chain is Elongation factor G-like protein, found in Thermotoga maritima (strain ATCC 43589 / DSM 3109 / JCM 10099 / NBRC 100826 / MSB8).